The primary structure comprises 316 residues: Polyprenyl transferase ausN (316 aa).

Helical transmembrane passes span 45–65, 69–89, 108–128, 129–149, 163–183, 188–208, 233–253, 256–276, and 296–316; these read VVGV…TFLL, VILS…NDLI, GAVS…CGGS, LLLL…FFAL, LILT…DMNP, IPTL…DIVY, DQIA…GGIL, LGIP…LRFL, and SCLL…CVRL.

This sequence belongs to the UbiA prenyltransferase family. The cofactor is Mg(2+).

The protein localises to the membrane. It catalyses the reaction 3,5-dimethylorsellinate + (2E,6E)-farnesyl diphosphate = (3R)-3-farnesyl-6-hydroxy-2,3,5-trimethyl-4-oxocyclohexa-1,5-diene-1-carboxylate + diphosphate + H(+). The protein operates within secondary metabolite biosynthesis; terpenoid biosynthesis. Functionally, polyprenyl transferase; part of the gene cluster A that mediates the biosynthesis of the fungal meroterpenoid acetoxydehydroaustin. The first step of the pathway is the synthesis of 3,5-dimethylorsellinic acid by the polyketide synthase ausA. 3,5-dimethylorsellinic acid is then prenylated by the polyprenyl transferase ausN. Further epoxidation by the FAD-dependent monooxygenase ausM and cyclization by the probable terpene cyclase ausL lead to the formation of protoaustinoid A. Protoaustinoid A is then oxidized to spiro-lactone preaustinoid A3 by the combined action of the FAD-binding monooxygenases ausB and ausC, and the dioxygenase ausE. Acid-catalyzed keto-rearrangement and ring contraction of the tetraketide portion of preaustinoid A3 by ausJ lead to the formation of preaustinoid A4. The aldo-keto reductase ausK, with the help of ausH, is involved in the next step by transforming preaustinoid A4 into isoaustinone which is in turn hydroxylated by the P450 monooxygenase ausI to form austinolide. The cytochrome P450 monooxygenase ausG then modifies austinolide to austinol. Austinol is further acetylated to austin by the O-acetyltransferase ausP, which spontaneously changes to dehydroaustin. The cytochrome P450 monooxygenase then converts dehydroaustin is into 7-dehydrodehydroaustin. The hydroxylation catalyzed by ausR permits the second O-acetyltransferase ausQ to add an additional acetyl group to the molecule, leading to the formation of acetoxydehydroaustin. Due to genetic rearrangements of the clusters and the subsequent loss of some enzymes, the end product of the Penicillium brasilianum austinoid biosynthesis clusters is acetoxydehydroaustin. This chain is Polyprenyl transferase ausN, found in Penicillium brasilianum.